The sequence spans 299 residues: Oxygen-dependent coproporphyrinogen-III oxidase (299 aa).

Ser92 is a binding site for substrate. His96 and His106 together coordinate a divalent metal cation. His106 acts as the Proton donor in catalysis. Substrate is bound at residue 108 to 110 (NVR). His145 and His175 together coordinate a divalent metal cation. The interval 239–274 (YVEFNLVYDRGTLFGLQSGGRAESILMSLPPRVRWE) is important for dimerization. 257-259 (GGR) provides a ligand contact to substrate.

This sequence belongs to the aerobic coproporphyrinogen-III oxidase family. Homodimer. The cofactor is a divalent metal cation.

It is found in the cytoplasm. The enzyme catalyses coproporphyrinogen III + O2 + 2 H(+) = protoporphyrinogen IX + 2 CO2 + 2 H2O. The protein operates within porphyrin-containing compound metabolism; protoporphyrin-IX biosynthesis; protoporphyrinogen-IX from coproporphyrinogen-III (O2 route): step 1/1. Functionally, involved in the heme biosynthesis. Catalyzes the aerobic oxidative decarboxylation of propionate groups of rings A and B of coproporphyrinogen-III to yield the vinyl groups in protoporphyrinogen-IX. This chain is Oxygen-dependent coproporphyrinogen-III oxidase, found in Xanthomonas axonopodis pv. citri (strain 306).